Here is a 1018-residue protein sequence, read N- to C-terminus: MTERKAAAPRGPYGAWFCLLVALALEVVRVSSNHDTLDPIYLPVALELLDAPEHFRVQQVGHYPPANSSLASRSETFLLMQPWPRAQPLLRASYPPFATQQVVPPRVTEPHRRPVPWDVRAVSVEAAVTPAEPYARVLFHLKGQDWPPGPGSLPCARLHATHPAGTAHRACRFQPSLGACVVELQFPSHWFSQSATTRAELAYTLEPAGEGPGGCGLGTEEEPREQALPVGGVELHPEDPPQYQEVPLDEAVTLRAPDVPMRPGQLFTATLLLRHNFTASLLTLRIKVKKGLQVIAARPAQPTLWTAKLDRFKGSKHHTSLITCHRAGPAGPDSSPLELSEFLWVDFAVENSTGGGVAVTRPVTWQLEYPGQAPEAEKDKMVWEILVSERDIRALIPLAKAEELVNTAPLTGVPQRIPVRLVTVDSGGALEEVTEHIGCESANTQVLQVSEACDAVFVAGQESRGAKGVRVDFWWRRLRASLKLTVWAPLLPLRIELTDTTLEQIRGWRVPGSAEGQLEPETAAEEVERRSRGCRLQYQRAGVRFLVPFAAHPLDGGRRLTHLLGPDWLLDVSHLVAAHAHVQDPRIASLEGGRILVGREPGVTSIEVRSPLSDAILGEQALAVTDDKVSVLDLRVQPVMGISLSLSRGMSHPGEVTATCWAQSALPAPKQEVALSLWLSFSDHTLAPAELYDRNDLGLSVSAEEPSAVLPAEEQGAQLGVVVSGVGAEGLPLHVALHPPEPCRRGRHRVPLASGTAWLGLPPLPTPVPALPSSPVRTSPFTEATVEGKRQIAGDMGGHVGIRGKFERAEEEAGKEENEAKEEEEDEEEMVPAPQRVTDLELGMYALLGIFCLAILIFLVNGVVFVLRYQRKEPPDSATDPASPQPHNWVWLGTNQEELSRQLDRCSSSGPPKGEGGCPCESGAGGDASTVAPSASESPAGSSSTLARKEAGGRRKRVEFVTFAPAPPTQPPEEPVGAPAVQSILVAGEEDIRWVCEDMGLKDPEELRNYMERIRGSS.

The signal sequence occupies residues 1-32; it reads MTERKAAAPRGPYGAWFCLLVALALEVVRVSS. The Extracellular portion of the chain corresponds to 33 to 846; sequence NHDTLDPIYL…VTDLELGMYA (814 aa). The N-linked (GlcNAc...) asparagine glycan is linked to asparagine 276. The tract at residues 606 to 911 is binds to HSPA5/GRP78; that stretch reads IEVRSPLSDA…QLDRCSSSGP (306 aa). Positions 666–1018 are confers cellular localization similar to full-length form; the sequence is LPAPKQEVAL…NYMERIRGSS (353 aa). The span at 807–818 shows a compositional bias: basic and acidic residues; the sequence is ERAEEEAGKEEN. The segment at 807 to 833 is disordered; the sequence is ERAEEEAGKEENEAKEEEEDEEEMVPA. Acidic residues predominate over residues 819-830; the sequence is EAKEEEEDEEEM. Residues 847 to 867 traverse the membrane as a helical segment; the sequence is LLGIFCLAILIFLVNGVVFVL. The Cytoplasmic portion of the chain corresponds to 868–1018; it reads RYQRKEPPDS…NYMERIRGSS (151 aa). The interval 900-956 is disordered; it reads SRQLDRCSSSGPPKGEGGCPCESGAGGDASTVAPSASESPAGSSSTLARKEAGGRRK. 2 stretches are compositionally biased toward low complexity: residues 906 to 922 and 932 to 944; these read CSSSGPPKGEGGCPCES and APSASESPAGSSS.

This sequence belongs to the TMEM132 family. Interacts with HSPA5/GRP78.

The protein resides in the golgi apparatus membrane. It localises to the endoplasmic reticulum membrane. May play a role in embryonic and postnatal development of the brain. Increased resistance to cell death induced by serum starvation in cultured cells. Regulates cAMP-induced GFAP gene expression via STAT3 phosphorylation. This chain is Transmembrane protein 132A (Tmem132a), found in Mus musculus (Mouse).